The primary structure comprises 573 residues: Membrane protein insertase YidC (573 aa).

A run of 6 helical transmembrane segments spans residues 6–26 (VFLI…WGKD), 355–375 (FSIM…LHSF), 379–399 (WGWA…PLSA), 446–466 (GGCL…WVLV), 488–508 (PYFI…KLTP), and 524–544 (PLVF…YWVV).

The protein belongs to the OXA1/ALB3/YidC family. Type 1 subfamily. In terms of assembly, interacts with the Sec translocase complex via SecD. Specifically interacts with transmembrane segments of nascent integral membrane proteins during membrane integration.

Its subcellular location is the cell inner membrane. Required for the insertion and/or proper folding and/or complex formation of integral membrane proteins into the membrane. Involved in integration of membrane proteins that insert both dependently and independently of the Sec translocase complex, as well as at least some lipoproteins. Aids folding of multispanning membrane proteins. The protein is Membrane protein insertase YidC of Xanthomonas campestris pv. campestris (strain ATCC 33913 / DSM 3586 / NCPPB 528 / LMG 568 / P 25).